Here is a 141-residue protein sequence, read N- to C-terminus: Large ribosomal subunit protein uL13 (141 aa).

The protein belongs to the universal ribosomal protein uL13 family. In terms of assembly, part of the 50S ribosomal subunit.

Its function is as follows. This protein is one of the early assembly proteins of the 50S ribosomal subunit, although it is not seen to bind rRNA by itself. It is important during the early stages of 50S assembly. This Sulfurovum sp. (strain NBC37-1) protein is Large ribosomal subunit protein uL13.